The primary structure comprises 823 residues: Aminopeptidase O (823 aa).

His481 lines the Zn(2+) pocket. Catalysis depends on Glu482, which acts as the Proton acceptor. Zn(2+) contacts are provided by His485 and Glu504. The Nucleolar localization signal motif lies at 693-703 (RRPRKRKRGKR).

Belongs to the peptidase M1 family. Zn(2+) is required as a cofactor. Expressed in testis, heart, brain, lung, liver, skeletal muscle, kidney and ovary. Expressed in vascular tissues.

The protein resides in the nucleus. Its subcellular location is the nucleolus. The protein localises to the cytoplasm. In terms of biological role, aminopeptidase which catalyzes the hydrolysis of amino acid residues from the N-terminus of peptide or protein substrates. The polypeptide is Aminopeptidase O (Aopep) (Mus musculus (Mouse)).